Consider the following 278-residue polypeptide: Potassium/proton antiporter CemA (278 aa).

4 consecutive transmembrane segments (helical) span residues 61–81, 155–175, 203–223, and 238–258; these read LIVL…FIIG, AIKN…LIVL, IILF…EVVI, and FIFL…KYWI.

Belongs to the CemA family.

It localises to the plastid. It is found in the chloroplast inner membrane. It catalyses the reaction K(+)(in) + H(+)(out) = K(+)(out) + H(+)(in). In terms of biological role, contributes to K(+)/H(+) antiport activity by supporting proton efflux to control proton extrusion and homeostasis in chloroplasts in a light-dependent manner to modulate photosynthesis. Prevents excessive induction of non-photochemical quenching (NPQ) under continuous-light conditions. Indirectly promotes efficient inorganic carbon uptake into chloroplasts. The chain is Potassium/proton antiporter CemA from Cyanidium caldarium (Red alga).